We begin with the raw amino-acid sequence, 1075 residues long: DNA-directed RNA polymerase subunit beta (1075 aa).

This sequence belongs to the RNA polymerase beta chain family. In plastids the minimal PEP RNA polymerase catalytic core is composed of four subunits: alpha, beta, beta', and beta''. When a (nuclear-encoded) sigma factor is associated with the core the holoenzyme is formed, which can initiate transcription.

The protein resides in the plastid. Its subcellular location is the chloroplast. The enzyme catalyses RNA(n) + a ribonucleoside 5'-triphosphate = RNA(n+1) + diphosphate. Functionally, DNA-dependent RNA polymerase catalyzes the transcription of DNA into RNA using the four ribonucleoside triphosphates as substrates. This is DNA-directed RNA polymerase subunit beta from Saccharum officinarum (Sugarcane).